Consider the following 768-residue polypeptide: Multidomain esterase (768 aa).

Positions 1 to 40 (MKKHFVVGETIKRFLRIGTSLALSISTLSLLPSAPRLSSA) are cleaved as a signal peptide. The segment at 41 to 264 (AGTIKIMPLG…YWLEQIEGYL (224 aa)) is acetylxylan esterase. Residue S68 is the Nucleophile; for acetylxylan esterase activity of the active site. Active-site for acetylxylan esterase activity residues include D240 and H243. The segment covering 267 to 283 (SDGPQQTQPTQPSQGDS) has biased composition (low complexity). Positions 267–289 (SDGPQQTQPTQPSQGDSGPELIY) are disordered. The Dockerin domain occupies 285–352 (PELIYGDLDG…IIGKIKEFTV (68 aa)). Residues 353–768 (AEKTVTEKPV…ADTFASKWLY (416 aa)) are glucuronoyl esterase. Positions 563-568 (GVSRYG) match the GXSYXG catalytic site motif motif. S565 acts as the Nucleophile; for glucuronoyl esterase activity in catalysis. Substrate-binding residues include K569, E633, and W679.

It in the N-terminal section; belongs to the carbohydrate esterase 3 (CE3) family. This sequence in the C-terminal section; belongs to the carbohydrate esterase 15 (CE15) family.

It localises to the secreted. The enzyme catalyses Deacetylation of xylans and xylo-oligosaccharides.. The catalysed reaction is a 4-O-methyl-alpha-D-glucuronosyl ester derivative + H2O = 4-O-methyl-alpha-D-glucuronate derivative + an alcohol + H(+). It participates in glycan degradation; xylan degradation. Functionally, esterase involved in the degradation of plant cell wall polysaccharides. Catalyzes the deacetylation of chemically acetylated xylan and native, steam-extracted xylan. Seems to act in synergy with the xylanase XynD which produces xylo-oligosaccharides. Also catalyzes the deesterification of methyl esters of 4-O-methyl-D-glucuronic acid (MeGlcA) side residues in synthetic glucuronoxylan methyl ester, suggesting that it may be able to cleave ester linkages between MeGlcA carboxyl and more complex alcohols, including linkages between hemicellulose and lignin alcohols in plant cell walls. This Ruminococcus flavefaciens protein is Multidomain esterase.